The chain runs to 325 residues: Acetyl-coenzyme A carboxylase carboxyl transferase subunit alpha (325 aa).

A CoA carboxyltransferase C-terminal domain is found at 43-297 (ELENNSTQLR…KTSLIAHLRQ (255 aa)).

This sequence belongs to the AccA family. Acetyl-CoA carboxylase is a heterohexamer composed of biotin carboxyl carrier protein (AccB), biotin carboxylase (AccC) and two subunits each of ACCase subunit alpha (AccA) and ACCase subunit beta (AccD).

It localises to the cytoplasm. It catalyses the reaction N(6)-carboxybiotinyl-L-lysyl-[protein] + acetyl-CoA = N(6)-biotinyl-L-lysyl-[protein] + malonyl-CoA. It functions in the pathway lipid metabolism; malonyl-CoA biosynthesis; malonyl-CoA from acetyl-CoA: step 1/1. Component of the acetyl coenzyme A carboxylase (ACC) complex. First, biotin carboxylase catalyzes the carboxylation of biotin on its carrier protein (BCCP) and then the CO(2) group is transferred by the carboxyltransferase to acetyl-CoA to form malonyl-CoA. In Cyanothece sp. (strain PCC 7425 / ATCC 29141), this protein is Acetyl-coenzyme A carboxylase carboxyl transferase subunit alpha.